A 242-amino-acid polypeptide reads, in one-letter code: Small ribosomal subunit protein uS2 (242 aa).

Belongs to the universal ribosomal protein uS2 family.

This is Small ribosomal subunit protein uS2 from Neisseria meningitidis serogroup C (strain 053442).